Here is a 408-residue protein sequence, read N- to C-terminus: Imidazolonepropionase (408 aa).

Fe(3+) contacts are provided by H73 and H75. Zn(2+) is bound by residues H73 and H75. 4-imidazolone-5-propanoate is bound by residues R82, Y145, and H178. Y145 contributes to the N-formimidoyl-L-glutamate binding site. Residue H243 coordinates Fe(3+). Position 243 (H243) interacts with Zn(2+). 4-imidazolone-5-propanoate is bound at residue Q246. Position 318 (D318) interacts with Fe(3+). D318 lines the Zn(2+) pocket. N-formimidoyl-L-glutamate-binding residues include N320 and G322. S323 lines the 4-imidazolone-5-propanoate pocket.

It belongs to the metallo-dependent hydrolases superfamily. HutI family. The cofactor is Zn(2+). Requires Fe(3+) as cofactor.

Its subcellular location is the cytoplasm. The enzyme catalyses 4-imidazolone-5-propanoate + H2O = N-formimidoyl-L-glutamate. It functions in the pathway amino-acid degradation; L-histidine degradation into L-glutamate; N-formimidoyl-L-glutamate from L-histidine: step 3/3. Its function is as follows. Catalyzes the hydrolytic cleavage of the carbon-nitrogen bond in imidazolone-5-propanoate to yield N-formimidoyl-L-glutamate. It is the third step in the universal histidine degradation pathway. The chain is Imidazolonepropionase from Shewanella sp. (strain W3-18-1).